The following is a 370-amino-acid chain: Molybdenum import ATP-binding protein ModC (370 aa).

Positions 2–233 (SVRVDIGHRL…LDLLPAEERG (232 aa)) constitute an ABC transporter domain. 31-38 (GPSGSGKT) serves as a coordination point for ATP. The 67-residue stretch at 293 to 359 (GLSALNILPG…VKTVSFDRAN (67 aa)) folds into the Mop domain.

This sequence belongs to the ABC transporter superfamily. Molybdate importer (TC 3.A.1.8) family. As to quaternary structure, the complex is composed of two ATP-binding proteins (ModC), two transmembrane proteins (ModB) and a solute-binding protein (ModA).

The protein localises to the cell inner membrane. The enzyme catalyses molybdate(out) + ATP + H2O = molybdate(in) + ADP + phosphate + H(+). Its function is as follows. Part of the ABC transporter complex ModABC involved in molybdenum import. Responsible for energy coupling to the transport system. In Mesorhizobium japonicum (strain LMG 29417 / CECT 9101 / MAFF 303099) (Mesorhizobium loti (strain MAFF 303099)), this protein is Molybdenum import ATP-binding protein ModC.